The chain runs to 373 residues: L-threonine 3-dehydrogenase, mitochondrial (373 aa).

NAD(+) is bound by residues 62 to 67 (GGLGQL), 88 to 90 (DIR), 106 to 107 (NI), Tyr-195, Lys-199, and Ile-225. The active-site Proton donor/acceptor is the Tyr-195.

This sequence belongs to the NAD(P)-dependent epimerase/dehydratase family. In terms of assembly, homodimer.

It is found in the mitochondrion. The catalysed reaction is L-threonine + NAD(+) = (2S)-2-amino-3-oxobutanoate + NADH + H(+). It functions in the pathway amino-acid degradation; L-threonine degradation via oxydo-reductase pathway; glycine from L-threonine: step 1/2. Its function is as follows. Catalyzes the NAD(+)-dependent oxidation of L-threonine to 2-amino-3-ketobutyrate, mediating L-threonine catabolism. The protein is L-threonine 3-dehydrogenase, mitochondrial of Mus musculus (Mouse).